The primary structure comprises 943 residues: MTDSKYFTTTKKGEIFELKAELNSDKKEKKKEAVKKVIASMTVGKDVSALFPDVVNCMQTDNLELKKLVYLYLMNYAKSQPDMAIMAVNTFVKDCEDPNPLIRALAVRTMGCIRVDKITEYLCEPLRKCLKDEDPYVRKTAAVCVAKLHDINAQLVEDQGFLDTLKDLISDSNPMVVANAVAALSEIAESHPSSNLLDLNPQSINKLLTALNECTEWGQIFILDCLANYMPKDDREAQSICERVTPRLSHANSAVVLSAVKVLMKFMEMLSKDLDYYATLLKKLAPPLVTLLSAEPELQYVALRNINLIVQKRPEILKHEMKVFFVKYNDPIYVKLEKLDIMIRLASQANIAQVLAELKEYATEVDVDFVRKAVRAIGRCAIKVEQSAERCVSTLLDLIQTKVNYVVQEAIVVIKDIFRKYPNKYESVIATLCENLDSLDEPEARAAMIWIVGEYAERIDNADELLESFLEGFHDESTQVQLQLLTAIVKLFLKKPTETQELVQQVLSLATQDSDNPDLRDRGYIYWRLLSTDPVAAKEVVLAEKPLISEETDLIEPTLLDELICYIGTLASVYHKPPNAFVEGGRGVVHKSLPPRTASSESTESPETAPAGAPAGDQPDVIPAQGDLLGDLLNLDLGPPVSGPPLAASSVQMGAVDLLGGGLDSLIGDSNFGAPSASVAAAPAPARLGAPISSGLSDLFDLTSGVGTLSGSYVAPKAVWLPAMKAKGLEISGTFTRQAGSISMDLQLTNKALQVMTDFAIQFNRNSFGLAPAAPLQVHVPLSPNQTVEISLPLNTVGSVLKMEPLNNLQVAVKNNIDVFYFSTLYPLHVLFVEDGKMDRQMFLATWKDIANENEAQFQIRDCPLNTEAASNKLQSSNIFTVAKRNVEGQDMLYQSLKLTNGIWVLAELRIQPGNPSFTLSLKCRAPEVSQHVYQAYETILKN.

Position 318 is an N6-acetyllysine (Lys318). Tyr574 carries the post-translational modification 3'-nitrotyrosine. Positions 584–621 (GGRGVVHKSLPPRTASSESTESPETAPAGAPAGDQPDV) are disordered. Positions 594 to 616 (PPRTASSESTESPETAPAGAPAG) are enriched in low complexity.

This sequence belongs to the adaptor complexes large subunit family. Adaptor protein complex 1 (AP-1) is a heterotetramer composed of two large adaptins (gamma-type subunit AP1G1 and beta-type subunit AP1B1), a medium adaptin (mu-type subunit AP1M1 or AP1M2) and a small adaptin (sigma-type subunit AP1S1 or AP1S2 or AP1S3). Widely expressed.

It is found in the cytoplasmic vesicle. The protein localises to the clathrin-coated vesicle membrane. It localises to the golgi apparatus. Functionally, subunit of clathrin-associated adaptor protein complex 1 that plays a role in protein sorting in the late-Golgi/trans-Golgi network (TGN) and/or endosomes. The AP complexes mediate both the recruitment of clathrin to membranes and the recognition of sorting signals within the cytosolic tails of transmembrane cargo molecules. The polypeptide is AP-1 complex subunit beta-1 (Ap1b1) (Mus musculus (Mouse)).